The chain runs to 393 residues: Phosphatidate cytidylyltransferase (393 aa).

8 helical membrane-spanning segments follow: residues 49–69, 73–93, 108–128, 141–161, 171–191, 198–218, 237–257, and 290–310; these read NFFR…WISV, IYSF…IIGI, IILG…IMMM, LSFV…ASLR, LFAL…CAIF, FWFV…YVVG, GFIG…HLHV, and IHII…GFLA.

The protein belongs to the CDS family.

It localises to the membrane. It catalyses the reaction a 1,2-diacyl-sn-glycero-3-phosphate + CTP + H(+) = a CDP-1,2-diacyl-sn-glycerol + diphosphate. The protein operates within phospholipid metabolism; CDP-diacylglycerol biosynthesis; CDP-diacylglycerol from sn-glycerol 3-phosphate: step 3/3. This is Phosphatidate cytidylyltransferase (CDS1) from Encephalitozoon cuniculi (strain GB-M1) (Microsporidian parasite).